The chain runs to 154 residues: Transcription antitermination protein NusB (154 aa).

It belongs to the NusB family.

Its function is as follows. Involved in transcription antitermination. Required for transcription of ribosomal RNA (rRNA) genes. Binds specifically to the boxA antiterminator sequence of the ribosomal RNA (rrn) operons. In Enterococcus faecalis (strain ATCC 700802 / V583), this protein is Transcription antitermination protein NusB.